A 377-amino-acid chain; its full sequence is Spermidine/putrescine import ATP-binding protein PotA (377 aa).

Residues 22–252 enclose the ABC transporter domain; the sequence is VRLQNVTKRF…PANRFVADFI (231 aa). ATP is bound at residue 54–61; the sequence is GPSGCGKT.

It belongs to the ABC transporter superfamily. Spermidine/putrescine importer (TC 3.A.1.11.1) family. As to quaternary structure, the complex is composed of two ATP-binding proteins (PotA), two transmembrane proteins (PotB and PotC) and a solute-binding protein (PotD).

The protein resides in the cell membrane. The enzyme catalyses ATP + H2O + polyamine-[polyamine-binding protein]Side 1 = ADP + phosphate + polyamineSide 2 + [polyamine-binding protein]Side 1.. Functionally, part of the ABC transporter complex PotABCD involved in spermidine/putrescine import. Responsible for energy coupling to the transport system. This is Spermidine/putrescine import ATP-binding protein PotA from Rubrobacter xylanophilus (strain DSM 9941 / JCM 11954 / NBRC 16129 / PRD-1).